Consider the following 148-residue polypeptide: Large ribosomal subunit protein bL9 (148 aa).

The protein belongs to the bacterial ribosomal protein bL9 family.

Functionally, binds to the 23S rRNA. This chain is Large ribosomal subunit protein bL9, found in Desulfatibacillum aliphaticivorans.